A 100-amino-acid chain; its full sequence is Small ribosomal subunit protein bS18c (100 aa).

Positions 1-19 (MDKSKRPFRKSKRSFRRRL) are enriched in basic residues. The interval 1–23 (MDKSKRPFRKSKRSFRRRLPPIG) is disordered.

Belongs to the bacterial ribosomal protein bS18 family. Part of the 30S ribosomal subunit.

It is found in the plastid. Its subcellular location is the chloroplast. This Calycanthus floridus var. glaucus (Eastern sweetshrub) protein is Small ribosomal subunit protein bS18c.